Here is a 140-residue protein sequence, read N- to C-terminus: Large ribosomal subunit protein bL21 (140 aa).

The tract at residues 106–140 (SGVKPAVGARTKIEPAVKPAKAKKSEAEASAEDAN) is disordered.

Belongs to the bacterial ribosomal protein bL21 family. As to quaternary structure, part of the 50S ribosomal subunit. Contacts protein L20.

Functionally, this protein binds to 23S rRNA in the presence of protein L20. This Paracoccus denitrificans (strain Pd 1222) protein is Large ribosomal subunit protein bL21.